The following is a 420-amino-acid chain: MVSRQEQFEQVQAVKKSINTASEEVKNQALLAMADHLVAATEEILAANALDMAAAKGKISDVMLDRLYLDADRIEAMARGIREVVALPDPIGEVLETSQLENGLVITKKRVAMGVIGIIYESRPNVTSDAAALTLKSGNAVVLRSGKDAYQTTHAIVTALKKGLETTTIHPNVIQLVEDTSRESSYAMMKAKGYLDLLIPRGGAGLINAVVENAIVPVIETGTGIVHVYVDKDADEDKALSIINNAKTSRPSVCNAMEILLVHENKAASILPRLDQMLVAERKEAGLEPIQFRLDSKASQFVSGQAAETQDFDTEFLDYVLAVKVVSSLEEAVAHIESHSTHHSDAIVTENAEAAAYFTDQVDSAAVYVNASTRFTDGGQFGLGCEMGISTQKLHARGPMGLKELTSYKYVVAGDGQIRE.

The protein belongs to the gamma-glutamyl phosphate reductase family.

It localises to the cytoplasm. The enzyme catalyses L-glutamate 5-semialdehyde + phosphate + NADP(+) = L-glutamyl 5-phosphate + NADPH + H(+). Its pathway is amino-acid biosynthesis; L-proline biosynthesis; L-glutamate 5-semialdehyde from L-glutamate: step 2/2. Its function is as follows. Catalyzes the NADPH-dependent reduction of L-glutamate 5-phosphate into L-glutamate 5-semialdehyde and phosphate. The product spontaneously undergoes cyclization to form 1-pyrroline-5-carboxylate. In Streptococcus pneumoniae (strain 70585), this protein is Gamma-glutamyl phosphate reductase.